A 569-amino-acid polypeptide reads, in one-letter code: Sialic acid-binding Ig-like lectin 5 (569 aa).

Residues 1–16 form the signal peptide; that stretch reads MRWAWLLPLLWAGCLA. Residues 17–439 are Extracellular-facing; it reads TDGYSLSVTG…KSETSRGTVL (423 aa). An Ig-like V-type domain is found at 18–116; sequence DGYSLSVTGS…DTGTYFFRLD (99 aa). Intrachain disulfides connect cysteine 35–cysteine 163, cysteine 40–cysteine 96, cysteine 157–cysteine 206, and cysteine 265–cysteine 308. N-linked (GlcNAc...) asparagine glycosylation occurs at asparagine 95. Residues arginine 114, lysine 120, and serine 122 each contribute to the N-acetylneuraminate site. 2 Ig-like C2-type domains span residues 139 to 224 and 229 to 324; these read PNIQ…QQLS and PQKM…VSLS. Residues asparagine 151, asparagine 200, and asparagine 203 are each glycosylated (N-linked (GlcNAc...) asparagine). 3 N-linked (GlcNAc...) asparagine glycosylation sites follow: asparagine 369, asparagine 372, and asparagine 387. A helical membrane pass occupies residues 440 to 460; it reads GAIWGAGLMALLAVCLCLIFF. The Cytoplasmic segment spans residues 461-569; the sequence is TVKVLRKKSA…VYTEIKIHKC (109 aa). The disordered stretch occupies residues 508 to 556; it reads HLNEPGSQTQKEQPPLATVPDTQKDEPELHYASLSFQGPMPPKPQNTEA. The short motif at 536–541 is the ITIM motif element; it reads LHYASL. The short motif at 559 to 564 is the SLAM-like motif element; sequence SVYTEI.

It belongs to the immunoglobulin superfamily. SIGLEC (sialic acid binding Ig-like lectin) family. Predominantly expressed by immature monocytic/myeloid lineage cells in bone marrow. Also found at lower levels in mature neutrophils and monocytes.

Its subcellular location is the membrane. Putative adhesion molecule that mediates sialic-acid dependent binding to cells. Preferentially binds to alpha-2,3-linked sialic acid. The sialic acid recognition site may be masked by cis interactions with sialic acids on the same cell surface. The polypeptide is Sialic acid-binding Ig-like lectin 5 (Siglec5) (Mus musculus (Mouse)).